The chain runs to 1415 residues: DNA-directed RNA polymerase subunit beta' (1415 aa).

4 residues coordinate Zn(2+): Cys-71, Cys-73, Cys-86, and Cys-89. Mg(2+) is bound by residues Asp-461, Asp-463, and Asp-465. Positions 815, 889, 896, and 899 each coordinate Zn(2+).

This sequence belongs to the RNA polymerase beta' chain family. The RNAP catalytic core consists of 2 alpha, 1 beta, 1 beta' and 1 omega subunit. When a sigma factor is associated with the core the holoenzyme is formed, which can initiate transcription. Mg(2+) is required as a cofactor. It depends on Zn(2+) as a cofactor.

It catalyses the reaction RNA(n) + a ribonucleoside 5'-triphosphate = RNA(n+1) + diphosphate. DNA-dependent RNA polymerase catalyzes the transcription of DNA into RNA using the four ribonucleoside triphosphates as substrates. This Haemophilus influenzae (strain ATCC 51907 / DSM 11121 / KW20 / Rd) protein is DNA-directed RNA polymerase subunit beta'.